The chain runs to 330 residues: tRNA uridine(34) hydroxylase (330 aa).

In terms of domain architecture, Rhodanese spans 123-217 (SDPEVILVDT…YLEEVKQEES (95 aa)). Cys-177 (cysteine persulfide intermediate) is an active-site residue.

The protein belongs to the TrhO family.

The enzyme catalyses uridine(34) in tRNA + AH2 + O2 = 5-hydroxyuridine(34) in tRNA + A + H2O. Its function is as follows. Catalyzes oxygen-dependent 5-hydroxyuridine (ho5U) modification at position 34 in tRNAs. The sequence is that of tRNA uridine(34) hydroxylase from Shewanella sp. (strain MR-4).